The following is a 276-amino-acid chain: Undecaprenyl-diphosphatase 2 (276 aa).

8 helical membrane-spanning segments follow: residues 4–24, 44–64, 87–107, 114–134, 150–170, 193–213, 225–245, and 256–276; these read IEAL…VSSL, DFLP…LIYF, ARLM…GLLL, LFAS…LLLW, LSFA…LPGF, FSFL…IPKL, LLLA…WFLM, and LRPF…FKLV.

It belongs to the UppP family.

The protein localises to the cell inner membrane. It catalyses the reaction di-trans,octa-cis-undecaprenyl diphosphate + H2O = di-trans,octa-cis-undecaprenyl phosphate + phosphate + H(+). Functionally, catalyzes the dephosphorylation of undecaprenyl diphosphate (UPP). Confers resistance to bacitracin. This Chromobacterium violaceum (strain ATCC 12472 / DSM 30191 / JCM 1249 / CCUG 213 / NBRC 12614 / NCIMB 9131 / NCTC 9757 / MK) protein is Undecaprenyl-diphosphatase 2.